The sequence spans 139 residues: Large ribosomal subunit protein uL16c (139 aa).

A disordered region spans residues 1-20 (MLSPKRTKYRKHHRGRMKGK).

The protein belongs to the universal ribosomal protein uL16 family. In terms of assembly, part of the 50S ribosomal subunit.

It localises to the plastid. Its subcellular location is the chloroplast. In Pleurastrum terricola (Filamentous green alga), this protein is Large ribosomal subunit protein uL16c.